The following is a 225-amino-acid chain: Histone H1.5 (225 aa).

Positions 1–23 are disordered; that stretch reads MSDVAVAETPAVKTPTKASKATK. An N-acetylserine modification is found at Ser-2. The span at 9–19 shows a compositional bias: low complexity; sequence TPAVKTPTKAS. Positions 37-113 constitute an H15 domain; the sequence is AHPPFINMIT…GANGRFRLAV (77 aa). The segment covering 145 to 156 has biased composition (basic and acidic residues); sequence KKTVAKKTGDKV. The segment at 145-225 is disordered; that stretch reads KKTVAKKTGD…RKAVGTAPKA (81 aa). Positions 157–175 are enriched in basic residues; it reads KKVKSPKRIAKPAVKKVTK. The segment covering 176–208 has biased composition (low complexity); sequence KAAAPTKSAANETAPKKAAATEAAPKKAAVTKA.

The protein belongs to the histone H1/H5 family.

It localises to the nucleus. The protein localises to the chromosome. Functionally, histones H1 are necessary for the condensation of nucleosome chains into higher-order structures. This Caenorhabditis elegans protein is Histone H1.5 (hil-5).